The following is a 297-amino-acid chain: Palmitoyl-protein thioesterase ABHD10, mitochondrial (297 aa).

The transit peptide at 1 to 43 directs the protein to the mitochondrion; the sequence is MAAWAPCRRWGWAAVSFGRHPGLSASLARKPPRAWWLSACRQK. The AB hydrolase-1 domain occupies 69–196; sequence IIFIPGYLSN…EIEMKGEWTL (128 aa). Active-site charge relay system residues include Ser143, Asp240, and His270.

This sequence belongs to the AB hydrolase superfamily.

The protein resides in the mitochondrion. It carries out the reaction S-hexadecanoyl-L-cysteinyl-[protein] + H2O = L-cysteinyl-[protein] + hexadecanoate + H(+). The enzyme catalyses mycophenolic acid O-acyl-beta-D-glucuronide + H2O = mycophenolate + D-glucuronate + H(+). With respect to regulation, inhibited by palmostatin-B. In terms of biological role, acts as an acyl-protein thioesterase that hydrolyzes fatty acids from acylated residues in proteins. Regulates the mitochondrial S-depalmitoylation of the nucleophilic active site residue of peroxiredoxin-5/PRDX5, a key antioxidant protein, therefore modulating mitochondrial antioxidant ability. Also catalyzes the deglucuronidation of mycophenolic acid acyl-glucuronide, an active metabolite of the immunosuppressant drug mycophenolate. This Mus musculus (Mouse) protein is Palmitoyl-protein thioesterase ABHD10, mitochondrial.